A 313-amino-acid chain; its full sequence is Coproporphyrin III ferrochelatase (313 aa).

Fe(2+)-binding residues include histidine 191 and glutamate 270.

It belongs to the ferrochelatase family.

The protein localises to the cytoplasm. It catalyses the reaction Fe-coproporphyrin III + 2 H(+) = coproporphyrin III + Fe(2+). The protein operates within porphyrin-containing compound metabolism; protoheme biosynthesis. Functionally, involved in coproporphyrin-dependent heme b biosynthesis. Catalyzes the insertion of ferrous iron into coproporphyrin III to form Fe-coproporphyrin III. This chain is Coproporphyrin III ferrochelatase, found in Enterococcus faecalis (strain ATCC 700802 / V583).